A 736-amino-acid polypeptide reads, in one-letter code: DNA topoisomerase 4 subunit A (736 aa).

The 465-residue stretch at Leu-32–Gln-496 folds into the Topo IIA-type catalytic domain. Tyr-120 (O-(5'-phospho-DNA)-tyrosine intermediate) is an active-site residue.

This sequence belongs to the type II topoisomerase GyrA/ParC subunit family. ParC type 1 subfamily. Heterotetramer composed of ParC and ParE.

It localises to the cell membrane. The enzyme catalyses ATP-dependent breakage, passage and rejoining of double-stranded DNA.. Topoisomerase IV is essential for chromosome segregation. It relaxes supercoiled DNA. Performs the decatenation events required during the replication of a circular DNA molecule. The sequence is that of DNA topoisomerase 4 subunit A from Rickettsia bellii (strain RML369-C).